The primary structure comprises 288 residues: Phenazine biosynthesis-like domain-containing protein (288 aa).

Residue Glu46 is part of the active site.

The protein belongs to the PhzF family. In terms of assembly, interacts with UNRIP/MAWD.

This chain is Phenazine biosynthesis-like domain-containing protein (PBLD), found in Pongo abelii (Sumatran orangutan).